The sequence spans 314 residues: Malate dehydrogenase (314 aa).

Residues 12–17 (GAGFTG) and D36 contribute to the NAD(+) site. Substrate contacts are provided by R87 and R93. NAD(+)-binding positions include N100 and 123–125 (LTN). Residue N125 coordinates substrate. S149 carries the post-translational modification Phosphoserine. A substrate-binding site is contributed by R156. Catalysis depends on H180, which acts as the Proton acceptor.

It belongs to the LDH/MDH superfamily. MDH type 3 family.

It catalyses the reaction (S)-malate + NAD(+) = oxaloacetate + NADH + H(+). Its function is as follows. Catalyzes the reversible oxidation of malate to oxaloacetate. This chain is Malate dehydrogenase, found in Halalkalibacterium halodurans (strain ATCC BAA-125 / DSM 18197 / FERM 7344 / JCM 9153 / C-125) (Bacillus halodurans).